Here is a 27-residue protein sequence, read N- to C-terminus: uncharacterized protein (27 aa).

Its subcellular location is the plastid. The protein resides in the chloroplast. This is an uncharacterized protein from Marchantia polymorpha (Common liverwort).